Consider the following 270-residue polypeptide: Putative phosphoenolpyruvate synthase regulatory protein (270 aa).

150-157 (GVSRCGKT) serves as a coordination point for ADP.

This sequence belongs to the pyruvate, phosphate/water dikinase regulatory protein family. PSRP subfamily.

It catalyses the reaction [pyruvate, water dikinase] + ADP = [pyruvate, water dikinase]-phosphate + AMP + H(+). The enzyme catalyses [pyruvate, water dikinase]-phosphate + phosphate + H(+) = [pyruvate, water dikinase] + diphosphate. Functionally, bifunctional serine/threonine kinase and phosphorylase involved in the regulation of the phosphoenolpyruvate synthase (PEPS) by catalyzing its phosphorylation/dephosphorylation. The sequence is that of Putative phosphoenolpyruvate synthase regulatory protein from Shewanella putrefaciens (strain CN-32 / ATCC BAA-453).